A 393-amino-acid polypeptide reads, in one-letter code: Putative mitochondrial cysteine synthase (393 aa).

The chain crosses the membrane as a helical span at residues 12 to 31; sequence LAWRECISIASVLIGAYASY. Lys86 carries the N6-(pyridoxal phosphate)lysine modification. Pyridoxal 5'-phosphate contacts are provided by residues 230-234 and Ser338; that span reads GTGGT.

The protein belongs to the cysteine synthase/cystathionine beta-synthase family. The cofactor is pyridoxal 5'-phosphate.

The protein resides in the mitochondrion. It is found in the mitochondrion outer membrane. It catalyses the reaction O-acetyl-L-serine + hydrogen sulfide = L-cysteine + acetate. Functionally, putative cysteine synthase that catalyzes the conversion of O-acetyl-L-serine (OAS) into cysteine, the last step in the cysteine biosynthesis pathway. However, this CS-like protein is unlikely to function in cysteine biosynthesis. It seems that in S.cerevisiae cysteine biosynthesis occurs exclusively through the cystathionine pathway and not via direct incorporation of sulfur into OAS. The protein is Putative mitochondrial cysteine synthase of Saccharomyces cerevisiae (strain ATCC 204508 / S288c) (Baker's yeast).